The sequence spans 213 residues: Adenylate kinase (213 aa).

14-19 (GSGKGT) contributes to the ATP binding site. The NMP stretch occupies residues 34–63 (STGDLLRAIIREGTPNGLKAKAYLDKGAFV). Residues Thr35, Arg40, 61–63 (AFV), 89–92 (GFPR), and Gln96 each bind AMP. An LID region spans residues 129–162 (SRFLCPSCSRIYNTSQGHTECPDCHVPLIRRSDD). ATP is bound at residue Arg130. Zn(2+) is bound by residues Cys133 and Cys136. 139–140 (IY) contributes to the ATP binding site. Residues Cys149 and Cys152 each contribute to the Zn(2+) site. The AMP site is built by Arg159 and Arg170. Asn198 contacts ATP.

Belongs to the adenylate kinase family. As to quaternary structure, monomer.

It localises to the cytoplasm. The catalysed reaction is AMP + ATP = 2 ADP. Its pathway is purine metabolism; AMP biosynthesis via salvage pathway; AMP from ADP: step 1/1. Its function is as follows. Catalyzes the reversible transfer of the terminal phosphate group between ATP and AMP. Plays an important role in cellular energy homeostasis and in adenine nucleotide metabolism. The sequence is that of Adenylate kinase from Chlamydia pneumoniae (Chlamydophila pneumoniae).